The following is a 203-amino-acid chain: N-(5'-phosphoribosyl)anthranilate isomerase (203 aa).

It belongs to the TrpF family.

The enzyme catalyses N-(5-phospho-beta-D-ribosyl)anthranilate = 1-(2-carboxyphenylamino)-1-deoxy-D-ribulose 5-phosphate. Its pathway is amino-acid biosynthesis; L-tryptophan biosynthesis; L-tryptophan from chorismate: step 3/5. In Thermoanaerobacter pseudethanolicus (strain ATCC 33223 / 39E) (Clostridium thermohydrosulfuricum), this protein is N-(5'-phosphoribosyl)anthranilate isomerase.